The chain runs to 156 residues: MLTHLDSQGRANMVDVTEKAVTAREAIAEARVRMLPDTLRMIVDGQHPKGDVFAVARIAGIQAAKKTSDLIPLCHPLMLTGVKVELAAEGEDVVHIVARCKLAGQTGVEMEALTAASVTALTIYDMCKAVDKGMVIEQVRLLEKTGGKSGHYKVEA.

Substrate-binding positions include 73-75 (LCH) and 110-111 (ME). Residue D125 is part of the active site.

Belongs to the MoaC family. As to quaternary structure, homohexamer; trimer of dimers.

It catalyses the reaction (8S)-3',8-cyclo-7,8-dihydroguanosine 5'-triphosphate = cyclic pyranopterin phosphate + diphosphate. Its pathway is cofactor biosynthesis; molybdopterin biosynthesis. Catalyzes the conversion of (8S)-3',8-cyclo-7,8-dihydroguanosine 5'-triphosphate to cyclic pyranopterin monophosphate (cPMP). The polypeptide is Cyclic pyranopterin monophosphate synthase (Pseudomonas entomophila (strain L48)).